The chain runs to 436 residues: 3-ketoacyl-CoA thiolase (436 aa).

Cys99 acts as the Acyl-thioester intermediate in catalysis. Residues His392 and Cys422 each act as proton acceptor in the active site.

The protein belongs to the thiolase-like superfamily. Thiolase family. As to quaternary structure, heterotetramer of two alpha chains (FadJ) and two beta chains (FadI).

The protein resides in the cytoplasm. The catalysed reaction is an acyl-CoA + acetyl-CoA = a 3-oxoacyl-CoA + CoA. It participates in lipid metabolism; fatty acid beta-oxidation. Functionally, catalyzes the final step of fatty acid oxidation in which acetyl-CoA is released and the CoA ester of a fatty acid two carbons shorter is formed. The chain is 3-ketoacyl-CoA thiolase from Shewanella putrefaciens (strain CN-32 / ATCC BAA-453).